Reading from the N-terminus, the 170-residue chain is Peptide deformylase (170 aa).

Residues C93 and H135 each contribute to the Fe cation site. E136 is a catalytic residue. H139 serves as a coordination point for Fe cation.

It belongs to the polypeptide deformylase family. Fe(2+) serves as cofactor.

The enzyme catalyses N-terminal N-formyl-L-methionyl-[peptide] + H2O = N-terminal L-methionyl-[peptide] + formate. Functionally, removes the formyl group from the N-terminal Met of newly synthesized proteins. Requires at least a dipeptide for an efficient rate of reaction. N-terminal L-methionine is a prerequisite for activity but the enzyme has broad specificity at other positions. This is Peptide deformylase from Acidobacterium capsulatum (strain ATCC 51196 / DSM 11244 / BCRC 80197 / JCM 7670 / NBRC 15755 / NCIMB 13165 / 161).